Consider the following 146-residue polypeptide: Leghemoglobin Lb120-34 (146 aa).

The 145-residue stretch at 2–146 (GFTEKQEALV…LASAIKKAMN (145 aa)) folds into the Globin domain. A nitrated tyrosine mark is found at Tyr24 and Tyr29. Ser44 serves as a coordination point for heme b. Ser44 is modified (phosphoserine). O2 is bound at residue His61. Heme b contacts are provided by Lys64, His93, and Lys96. Tyr134 carries the nitrated tyrosine modification.

Belongs to the plant globin family. In terms of assembly, monomer. Nitrated in effective nodules and particularly in hypoxic conditions; this mechanism may play a protective role in the symbiosis by buffering toxic peroxynitrite NO(2)(-). Nitration level decrease during nodule senescence. Post-translationally, phosphorylation at Ser-44 disrupts the molecular environment of its porphyrin ring oxygen binding pocket, thus leading to a reduced oxygen consumption and to the delivery of oxygen O(2) to symbiosomes. Root nodules.

The protein localises to the cytoplasm. It localises to the cytosol. It is found in the nucleus. In terms of biological role, leghemoglobin that reversibly binds oxygen O(2) through a pentacoordinated heme iron. In root nodules, facilitates the diffusion of oxygen to the bacteroids while preventing the bacterial nitrogenase from being inactivated by buffering dioxygen, nitric oxide and carbon monoxide, and promoting the formation of reactive oxygen species (ROS, e.g. H(2)O(2)). This role is essential for symbiotic nitrogen fixation (SNF). The protein is Leghemoglobin Lb120-34 of Pisum sativum (Garden pea).